Reading from the N-terminus, the 357-residue chain is Uroporphyrinogen decarboxylase (357 aa).

Residues 27–31 (RQAGR), D77, Y154, S209, and H330 contribute to the substrate site.

This sequence belongs to the uroporphyrinogen decarboxylase family. In terms of assembly, homodimer.

The protein resides in the cytoplasm. It carries out the reaction uroporphyrinogen III + 4 H(+) = coproporphyrinogen III + 4 CO2. The protein operates within porphyrin-containing compound metabolism; protoporphyrin-IX biosynthesis; coproporphyrinogen-III from 5-aminolevulinate: step 4/4. In terms of biological role, catalyzes the decarboxylation of four acetate groups of uroporphyrinogen-III to yield coproporphyrinogen-III. In Acinetobacter baumannii (strain AB0057), this protein is Uroporphyrinogen decarboxylase.